The sequence spans 213 residues: MSTLHKVKAYFGMAPMDDYDDEYYDDVDAPAPRRAPVEDRRYPRRGERFADDAEYGYDEPGYRAGGPAGYADEDRFVSRHAPSREFDRPAPRLGSLRGSAPTRGALAMDPRRAAIFDEGSPLSKITTLRPKDYSEARTIGERFRDGTPVIMDLVSMDNADAKRVVDFAAGLAFALRGSFDKVATKVFLLSPADIDVSAEERRRIAESGFYSYQ.

The disordered stretch occupies residues 27 to 103 (VDAPAPRRAP…GSLRGSAPTR (77 aa)). Composition is skewed to basic and acidic residues over residues 35 to 51 (APVEDRRYPRRGERFAD) and 72 to 90 (DEDRFVSRHAPSREFDRPA).

This sequence belongs to the SepF family. In terms of assembly, homodimer. Interacts with FtsZ.

The protein localises to the cytoplasm. Its function is as follows. Cell division protein that is part of the divisome complex and is recruited early to the Z-ring. Probably stimulates Z-ring formation, perhaps through the cross-linking of FtsZ protofilaments. Its function overlaps with FtsA. The protein is Cell division protein SepF of Mycobacteroides abscessus (strain ATCC 19977 / DSM 44196 / CCUG 20993 / CIP 104536 / JCM 13569 / NCTC 13031 / TMC 1543 / L948) (Mycobacterium abscessus).